The sequence spans 370 residues: tRNA-specific 2-thiouridylase MnmA 1 (370 aa).

Residues 9–16 and Met35 each bind ATP; that span reads GMSGGVDS. The interaction with target base in tRNA stretch occupies residues 95-97; it reads NPD. Cys100 (nucleophile) is an active-site residue. The cysteines at positions 100 and 196 are disulfide-linked. Residue Gly124 coordinates ATP. Residues 146–148 form an interaction with tRNA region; it reads KDQ. The Cysteine persulfide intermediate role is filled by Cys196. The tract at residues 306-307 is interaction with tRNA; it reads RY.

This sequence belongs to the MnmA/TRMU family.

The protein resides in the cytoplasm. It carries out the reaction S-sulfanyl-L-cysteinyl-[protein] + uridine(34) in tRNA + AH2 + ATP = 2-thiouridine(34) in tRNA + L-cysteinyl-[protein] + A + AMP + diphosphate + H(+). Functionally, catalyzes the 2-thiolation of uridine at the wobble position (U34) of tRNA, leading to the formation of s(2)U34. The protein is tRNA-specific 2-thiouridylase MnmA 1 of Geobacillus kaustophilus (strain HTA426).